A 614-amino-acid chain; its full sequence is Putative Na(+)/H(+) antiporter YjbQ (614 aa).

13 helical membrane-spanning segments follow: residues 3–23 (HTSVASLVVVLIVAFLTPILL), 32–52 (VVVAEIIMGLIIGKSGLNLVV), 57–77 (WLQTLSMLGFIFLMFLSGLEI), 107–127 (IFVGIFILSLLLSYGFVLAGF), 130–150 (NAFLMTLIISTISLGVVVPTL), 163–183 (IILLVAVIADLATMILLAVFS), 193–213 (MWLLMILFAAGVVLYFFGRVF), 225–244 (GTIQIGTRAIFTLIIVLVAL), 248–267 (LGAENILGAFLAGVLVSLLS), 282–302 (GFLIPIFFVMVGVKLDIWTLF), 307–327 (ILIMIPLLLLALLVSKIIPVM), 338–358 (IFASGFLLTSTLSLVIAAATI), and 368–388 (NMSGALILVAVIASIFTPICF). One can recognise an RCK N-terminal domain in the interval 401-519 (KKTITFIGAN…EQGISIFSIL (119 aa)). The region spanning 533–614 (PGVMKLLTNQ…VTDLKKTLEG (82 aa)) is the RCK C-terminal domain.

The protein belongs to the monovalent cation:proton antiporter 2 (CPA2) transporter (TC 2.A.37) family.

It localises to the cell membrane. With respect to regulation, binds cyclic di-AMP (c-di-AMP), which may regulate the transporter activity. Probable Na(+)/H(+) antiporter. This is Putative Na(+)/H(+) antiporter YjbQ from Bacillus subtilis (strain 168).